A 784-amino-acid chain; its full sequence is ATP-dependent zinc metalloprotease FTSH 9, chloroplastic/mitochondrial (784 aa).

Composition is skewed to low complexity over residues 1–12, 24–34, and 42–53; these read MSALQASLLLRP, PLPSSSASFPR, and PLPLRALASEGP. A chloroplast and mitochondrion-targeting transit peptide spans 1 to 47; sequence MSALQASLLLRPLPSPLPPRRRLPLPSSSASFPRAGHHRRLPLPLRA. The tract at residues 1 to 71 is disordered; that stretch reads MSALQASLLL…DPPPPELPAA (71 aa). A compositionally biased stretch (pro residues) spans 54–69; it reads QPAPSPAPDPPPPELP. The next 2 membrane-spanning stretches (helical) occupy residues 104–124 and 267–287; these read WVLA…DWVV and IFST…GAAA. 368 to 375 is a binding site for ATP; the sequence is GSPGTGKT. His-601 contributes to the Zn(2+) binding site. The active site involves Glu-602. Zn(2+)-binding residues include His-605 and Asp-679.

The protein in the N-terminal section; belongs to the AAA ATPase family. This sequence in the C-terminal section; belongs to the peptidase M41 family. Requires Zn(2+) as cofactor.

Its subcellular location is the mitochondrion membrane. The protein resides in the plastid. It is found in the chloroplast thylakoid membrane. Functionally, probable ATP-dependent zinc metallopeptidase. This Oryza sativa subsp. japonica (Rice) protein is ATP-dependent zinc metalloprotease FTSH 9, chloroplastic/mitochondrial (FTSH9).